The following is a 318-amino-acid chain: Mevalonate 3-kinase (318 aa).

Leu19 is a binding site for substrate. Residues 96 to 100 (YSSQN) and 105 to 108 (SGSS) contribute to the ATP site. Positions 140 and 144 each coordinate substrate. Residues Arg185 and Ser188 each contribute to the ATP site.

Belongs to the GHMP kinase family. In terms of assembly, homodimer.

The enzyme catalyses (R)-mevalonate + ATP = (R)-3-phosphomevalonate + ADP + H(+). Its pathway is isoprenoid biosynthesis; isopentenyl diphosphate biosynthesis via mevalonate pathway. Its function is as follows. Catalyzes the phosphorylation of mevalonate (MVA) to yield mevalonate-3-phosphate. Functions in an alternative mevalonate pathway, only present in extreme acidophiles of the Thermoplasmatales order, which passes through mevalonate 3-phosphate rather than mevalonate 5-phosphate. The sequence is that of Mevalonate 3-kinase from Thermoplasma acidophilum (strain ATCC 25905 / DSM 1728 / JCM 9062 / NBRC 15155 / AMRC-C165).